A 345-amino-acid chain; its full sequence is 3-dehydroquinate synthase (345 aa).

Belongs to the archaeal-type DHQ synthase family.

It catalyses the reaction 2-amino-2,3,7-trideoxy-D-lyxo-hept-6-ulosonate + NAD(+) + H2O = 3-dehydroquinate + NH4(+) + NADH + H(+). In terms of biological role, catalyzes the oxidative deamination and cyclization of 2-amino-3,7-dideoxy-D-threo-hept-6-ulosonic acid (ADH) to yield 3-dehydroquinate (DHQ), which is fed into the canonical shikimic pathway of aromatic amino acid biosynthesis. The chain is 3-dehydroquinate synthase from Methanocorpusculum labreanum (strain ATCC 43576 / DSM 4855 / Z).